Reading from the N-terminus, the 65-residue chain is Protein YSY6 (65 aa).

The chain crosses the membrane as a helical span at residues 45 to 65; it reads LGILLFLLVGGGVLQLISYIL.

It belongs to the RAMP4 family.

Its subcellular location is the membrane. The protein resides in the endoplasmic reticulum membrane. Functionally, interacts with target proteins during their translocation into the lumen of the endoplasmic reticulum. Protects unfolded target proteins against degradation during ER stress. May facilitate glycosylation of target proteins after termination of ER stress. The polypeptide is Protein YSY6 (YSY6) (Saccharomyces cerevisiae (strain ATCC 204508 / S288c) (Baker's yeast)).